We begin with the raw amino-acid sequence, 1257 residues long: Protein flightless-1 homolog (1257 aa).

LRR repeat units follow at residues 6-31, 32-54, 56-77, 78-102, 103-126, 128-148, 149-172, 174-195, 197-221, 222-244, 246-267, 268-290, 292-315, 316-338, 339-361, and 363-384; these read LQFV…VEQM, TQMT…LSRC, NLEH…LSDL, PRLR…IFRM, KDLT…EYAK, SIVL…VCAN, LIDL…IRRL, MLQS…QLPS, TSLS…LDDM, HNLR…LFKL, NLRK…EGEW, ENLE…VVKL, RLTK…IGKL, IQLT…ISRC, VKLQ…IHLL, and DLKV…PNDA. Gelsolin-like repeat units follow at residues 523–600, 640–714, 759–832, and 1168–1243; these read MDEA…EEFL, AVEM…PEFW, ELPK…MMFR, and EKTV…CRFR.

Belongs to the villin/gelsolin family.

May play a key role in embryonic cellularization by interacting with both the cytoskeleton and other cellular components. This Caenorhabditis elegans protein is Protein flightless-1 homolog (fli-1).